The primary structure comprises 1055 residues: MALKLTSPPSVFSQSRRLSSSSLIPIRSKSTFTGFRSRTGVYLSKTTALQSSTKLSVAAESPAATIATDDWGKVSAVLFDMDGVLCNSEDLSRRAAVDVFTEMGVEVTVDDFVPFMGTGEAKFLGGVASVKEVKGFDPDAAKERFFEIYLDKYAKPESGIGFPGALELVTECKNKGLKVAVASSADRIKVDANLKAAGLSLTMFDAIVSADAFENLKPAPDIFLAAAKILGVPTSECVVIEDALAGVQAAQAANMRCIAVKTTLSEAILKDAGPSMIRDDIGNISINDILTGGSDSTRNSTAMLEENTVSDKTSANGFQGSRRDILRYGSLGIALSCVYFAATNWKAMQYASPKALWNALVGAKSPSFTQNQGEGRVQQFVDYIADLESKQTATTVPEFPSKLDWLNTAPLQFRRDLKGKVVILDFWTYCCINCMHVLPDLEFLEKKYKDMPFTVVGVHSAKFDNEKDLDAIRNAVLRYDISHPVVNDGDMYMWRELGINSWPTFAVVSPNGKVIAQIAGEGHRKDLDDVVAAALTYYGGKNVLDSTPLPTRLEKDNDPRLATSPLKFPGKLAIDTLNNRLFISDSNHNRIIVTDLEGNFIVQIGSSGEEGFQDGSFEDAAFNRPQGLAYNAKKNLLYVADTENHALREIDFVNERVQTLAGNGTKGSDYQGGRKGTKQLLNSPWDVCFEPVNEKVYIAMAGQHQIWEYSVLDGITRVFSGNGYERNLNGSTPQTTSFAQPSGISLGPDLKEAYIADSESSSIRALDLQTGGSRLLAGGDPYFSENLFKFGDNDGVGAEVLLQHPLGVLCANDGQIYLTDSYNHKIKKLDPVTKRVVTLAGTGKAGFKDGKVKGAQLSEPAGLAITENGRLFVADTNNSLIRYIDLNKGEDSEILTLELKGVQPPTPKAKSLKRLRKRASADTKIVKVDSVTSREGDLNLKISLPDGYHFSKEARSKFVVDVEPENAVAIDPTEGTLSPEGSTMLHFIQSSTSASVGKISCKVYYCKEDEVCLYQSVQFEVPFKVESELSASPTITFTVTPRAPDAGGLQLQGTR.

A chloroplast-targeting transit peptide spans 1–56 (MALKLTSPPSVFSQSRRLSSSSLIPIRSKSTFTGFRSRTGVYLSKTTALQSSTKLS). The residue at position 57 (V57) is an N-acetylvaline. Residues 59–327 (AESPAATIAT…FQGSRRDILR (269 aa)) lie on the Stromal side of the membrane. The Nucleophile role is filled by D80. Mg(2+) is bound by residues D80 and D82. D80 is a substrate binding site. D82 acts as the Proton donor in catalysis. Substrate contacts are provided by residues E89, 118–122 (TGEAK), 141–144 (AKER), and 183–189 (SSADRIK). D242 lines the Mg(2+) pocket. The helical transmembrane segment at 328–345 (YGSLGIALSCVYFAATNW) threads the bilayer. Over 346-1055 (KAMQYASPKA…AGGLQLQGTR (710 aa)) the chain is Lumenal. Residues 359–536 (ALVGAKSPSF…LDDVVAAALT (178 aa)) enclose the Thioredoxin domain. C431 and C434 are disulfide-bonded. NHL repeat units follow at residues 565-597 (PLKF…TDLE), 611-647 (GFQD…NHAL), 673-712 (GRKG…YSVL), 802-832 (LQHP…LDPV), and 854-887 (GAQL…IDLN).

In the N-terminal section; belongs to the HAD-like hydrolase superfamily. It in the C-terminal section; belongs to the thioredoxin family. Mg(2+) is required as a cofactor.

Its subcellular location is the plastid. The protein resides in the chloroplast thylakoid membrane. Required to maintain light harvesting efficiency, especially during nonphotochemical quenching (NPQ) recovery, via the regulation of chlorophyll excited-state lifetime probably by preventing the formation of a slowly reversible form of antenna quenching. In Arabidopsis thaliana (Mouse-ear cress), this protein is Protein SUPPRESSOR OF QUENCHING 1, chloroplastic.